Reading from the N-terminus, the 130-residue chain is Fumarate reductase subunit D (130 aa).

The next 3 membrane-spanning stretches (helical) occupy residues 35 to 55 (FAMI…LGVI), 67 to 87 (SFAT…LPMW), and 110 to 130 (IACY…IFMI).

This sequence belongs to the FrdD family. As to quaternary structure, part of an enzyme complex containing four subunits: a flavoprotein (FrdA), an iron-sulfur protein (FrdB), and two hydrophobic anchor proteins (FrdC and FrdD).

It is found in the cell inner membrane. In terms of biological role, anchors the catalytic components of the fumarate reductase complex to the cell membrane, binds quinones. The chain is Fumarate reductase subunit D from Vibrio cholerae serotype O1 (strain M66-2).